The chain runs to 538 residues: C-22 sterol desaturase ERG5 (538 aa).

A helical transmembrane segment spans residues 46 to 66 (LKIFATLICILLVWDQVAYQI). Glycyl lysine isopeptide (Lys-Gly) (interchain with G-Cter in ubiquitin) cross-links involve residues lysine 164 and lysine 198. Cysteine 476 contacts heme.

This sequence belongs to the cytochrome P450 family. Interacts with ERG28. The cofactor is heme.

It is found in the endoplasmic reticulum membrane. It catalyses the reaction 5-dehydroepisterol + NADPH + O2 + H(+) = ergosta-5,7,22,24(28)-tetraen-3beta-ol + NADP(+) + 2 H2O. Its pathway is steroid metabolism; ergosterol biosynthesis; ergosterol from zymosterol: step 4/5. Functionally, C-22 sterol desaturase; part of the third module of ergosterol biosynthesis pathway that includes the late steps of the pathway. ERG5 converts 5-dehydroepisterol into ergosta-5,7,22,24(28)-tetraen-3beta-ol by forming the C-22(23) double bond in the sterol side chain. The third module or late pathway involves the ergosterol synthesis itself through consecutive reactions that mainly occur in the endoplasmic reticulum (ER) membrane. Firstly, the squalene synthase ERG9 catalyzes the condensation of 2 farnesyl pyrophosphate moieties to form squalene, which is the precursor of all steroids. Squalene synthase is crucial for balancing the incorporation of farnesyl diphosphate (FPP) into sterol and nonsterol isoprene synthesis. Secondly, the squalene epoxidase ERG1 catalyzes the stereospecific oxidation of squalene to (S)-2,3-epoxysqualene, which is considered to be a rate-limiting enzyme in steroid biosynthesis. Then, the lanosterol synthase ERG7 catalyzes the cyclization of (S)-2,3 oxidosqualene to lanosterol, a reaction that forms the sterol core. In the next steps, lanosterol is transformed to zymosterol through a complex process involving various demethylation, reduction and desaturation reactions. The lanosterol 14-alpha-demethylase ERG11 (also known as CYP51) catalyzes C14-demethylation of lanosterol to produce 4,4'-dimethyl cholesta-8,14,24-triene-3-beta-ol, which is critical for ergosterol biosynthesis. The C-14 reductase ERG24 reduces the C14=C15 double bond of 4,4-dimethyl-cholesta-8,14,24-trienol to produce 4,4-dimethyl-cholesta-8,24-dienol. 4,4-dimethyl-cholesta-8,24-dienol is substrate of the C-4 demethylation complex ERG25-ERG26-ERG27 in which ERG25 catalyzes the three-step monooxygenation required for the demethylation of 4,4-dimethyl and 4alpha-methylsterols, ERG26 catalyzes the oxidative decarboxylation that results in a reduction of the 3-beta-hydroxy group at the C-3 carbon to an oxo group, and ERG27 is responsible for the reduction of the keto group on the C-3. ERG28 has a role as a scaffold to help anchor ERG25, ERG26 and ERG27 to the endoplasmic reticulum and ERG29 regulates the activity of the iron-containing C4-methylsterol oxidase ERG25. Then, the sterol 24-C-methyltransferase ERG6 catalyzes the methyl transfer from S-adenosyl-methionine to the C-24 of zymosterol to form fecosterol. The C-8 sterol isomerase ERG2 catalyzes the reaction which results in unsaturation at C-7 in the B ring of sterols and thus converts fecosterol to episterol. The sterol-C5-desaturase ERG3 then catalyzes the introduction of a C-5 double bond in the B ring to produce 5-dehydroepisterol. The C-22 sterol desaturase ERG5 further converts 5-dehydroepisterol into ergosta-5,7,22,24(28)-tetraen-3beta-ol by forming the C-22(23) double bond in the sterol side chain. Finally, ergosta-5,7,22,24(28)-tetraen-3beta-ol is substrate of the C-24(28) sterol reductase ERG4 to produce ergosterol. This Saccharomyces cerevisiae (strain ATCC 204508 / S288c) (Baker's yeast) protein is C-22 sterol desaturase ERG5.